The sequence spans 488 residues: Ribulose bisphosphate carboxylase large chain (488 aa).

Residues Asn-127 and Thr-177 each contribute to the substrate site. Lys-179 functions as the Proton acceptor in the catalytic mechanism. Lys-181 contributes to the substrate binding site. Mg(2+) is bound by residues Lys-205, Asp-207, and Glu-208. N6-carboxylysine is present on Lys-205. Residue His-297 is the Proton acceptor of the active site. Substrate is bound by residues Arg-298, His-330, and Ser-382.

It belongs to the RuBisCO large chain family. Type I subfamily. In terms of assembly, heterohexadecamer of 8 large chains and 8 small chains. Mg(2+) is required as a cofactor.

The protein localises to the plastid. Its subcellular location is the chloroplast. It catalyses the reaction 2 (2R)-3-phosphoglycerate + 2 H(+) = D-ribulose 1,5-bisphosphate + CO2 + H2O. It carries out the reaction D-ribulose 1,5-bisphosphate + O2 = 2-phosphoglycolate + (2R)-3-phosphoglycerate + 2 H(+). In terms of biological role, ruBisCO catalyzes two reactions: the carboxylation of D-ribulose 1,5-bisphosphate, the primary event in carbon dioxide fixation, as well as the oxidative fragmentation of the pentose substrate in the photorespiration process. Both reactions occur simultaneously and in competition at the same active site. The polypeptide is Ribulose bisphosphate carboxylase large chain (Rhodomonas salina (Cryptomonas salina)).